We begin with the raw amino-acid sequence, 101 residues long: NAD(P)H-quinone oxidoreductase subunit 4L, chloroplastic (101 aa).

The next 2 membrane-spanning stretches (helical) occupy residues 2–22 (MFEH…YGLI) and 61–81 (IFSI…LAIV).

It belongs to the complex I subunit 4L family. In terms of assembly, NDH is composed of at least 16 different subunits, 5 of which are encoded in the nucleus.

The protein localises to the plastid. It is found in the chloroplast thylakoid membrane. The catalysed reaction is a plastoquinone + NADH + (n+1) H(+)(in) = a plastoquinol + NAD(+) + n H(+)(out). It catalyses the reaction a plastoquinone + NADPH + (n+1) H(+)(in) = a plastoquinol + NADP(+) + n H(+)(out). Functionally, NDH shuttles electrons from NAD(P)H:plastoquinone, via FMN and iron-sulfur (Fe-S) centers, to quinones in the photosynthetic chain and possibly in a chloroplast respiratory chain. The immediate electron acceptor for the enzyme in this species is believed to be plastoquinone. Couples the redox reaction to proton translocation, and thus conserves the redox energy in a proton gradient. This chain is NAD(P)H-quinone oxidoreductase subunit 4L, chloroplastic, found in Dioscorea elephantipes (Elephant's foot yam).